The primary structure comprises 477 residues: Glycogen synthase (477 aa).

Lys15 lines the ADP-alpha-D-glucose pocket.

The protein belongs to the glycosyltransferase 1 family. Bacterial/plant glycogen synthase subfamily.

It catalyses the reaction [(1-&gt;4)-alpha-D-glucosyl](n) + ADP-alpha-D-glucose = [(1-&gt;4)-alpha-D-glucosyl](n+1) + ADP + H(+). The protein operates within glycan biosynthesis; glycogen biosynthesis. Functionally, synthesizes alpha-1,4-glucan chains using ADP-glucose. The protein is Glycogen synthase of Shigella boydii serotype 18 (strain CDC 3083-94 / BS512).